A 58-amino-acid chain; its full sequence is Ferredoxin-2 (58 aa).

4Fe-4S ferredoxin-type domains are found at residues 2–27 and 30–58; these read IEVNDDCMACEACVEICPDVFEMNEE and KAVVINPDSDLDCVEEAIDSCPAEAIVRS. Residue Cys-8 participates in [3Fe-4S] cluster binding. Cys-11 is modified (cysteine methyl disulfide). Cys-14 is a binding site for [3Fe-4S] cluster. Cysteines 18 and 42 form a disulfide. [3Fe-4S] cluster is bound at residue Cys-50.

Homodimer (ferredoxin I) or homotetramer (ferredoxin II). [3Fe-4S] cluster is required as a cofactor. [4Fe-4S] cluster serves as cofactor.

Ferredoxins are iron-sulfur proteins that transfer electrons in a wide variety of metabolic reactions. This chain is Ferredoxin-2, found in Megalodesulfovibrio gigas (Desulfovibrio gigas).